We begin with the raw amino-acid sequence, 507 residues long: Phosphoprotein (507 aa).

Residues 1 to 48 (MAEEQARHVKNGLECIRALKAEPIGSLAIGEAMAAWSEISDNPGQERA) are interaction with N0. 5 disordered regions span residues 42–91 (NPGQ…DDTE), 133–163 (SGLDGDSTLSEGDNESENSDVDIGEPDTEGY), 201–227 (NNFPKLGKTLNVPPPPDPGRASTSETP), 252–273 (TQCARKSPSEPSGPGAPAGNVP), and 285–307 (WTPESGTTISPRSQNNKEGGDHY). Ser86 and Ser151 each carry phosphoserine. A compositionally biased stretch (acidic residues) spans 144-160 (GDNESENSDVDIGEPDT). Over residues 260–270 (SEPSGPGAPAG) the composition is skewed to low complexity. Polar residues predominate over residues 286–301 (TPESGTTISPRSQNNK). The tract at residues 304 to 376 (GDHYDDELFS…LSSIMIAIPG (73 aa)) is multimerization. 2 interaction with the L polymerase regions span residues 361 to 377 (STLEGHLSSIMIAIPGL) and 396 to 410 (PIIGRDSGRALAEVL). A x domain (XD) region spans residues 457–507 (GPVSRSVIRSIIKSSRIEEDRKRYLMTLLDDIKGANDLSKFHQMLMKIIMK). Positions 459–507 (VSRSVIRSIIKSSRIEEDRKRYLMTLLDDIKGANDLSKFHQMLMKIIMK) are interaction with the nucleocapsid (N-RNA).

It belongs to the morbillivirus P protein family. As to quaternary structure, homotetramer. Interacts (via multimerization domain and XD domain) with polymerase L; this interaction forms the polymerase L-P complex. Interacts (via N-terminus) with N0 (via Ncore); this interaction allows P to chaperon N0 to avoid N polymerization and non-specific RNA binding before encapsidation. Interacts (via C-terminus) with N-RNA template (via Ntail); this interaction maintains the P/L complex anchored to the nucleocapsid template during the sequential transcription. Interacts (via C-terminus) with protein C this interaction allows C to associate with the ribonucleocapsid. In terms of processing, phosphorylation on serines by host CK2 is necessary for the formation of viral factories.

Functionally, essential cofactor of the RNA polymerase L that plays a central role in the transcription and replication by forming the polymerase complex with RNA polymerase L and recruiting L to the genomic N-RNA template for RNA synthesis. Also plays a central role in the encapsidation of nascent RNA chains by forming the encapsidation complex with the nucleocapsid protein N (N-P complex). Acts as a chaperone for newly synthesized free N protein, so-called N0, allowing encapsidation of nascent RNA chains during replication. The nucleoprotein protein N prevents excessive phosphorylation of P, which leads to down-regulation of viral transcription/ replication. Participates, together with N, in the formation of viral factories (viroplasms), which are large inclusions in the host cytoplasm where replication takes place. This is Phosphoprotein (P/V) from Homo sapiens (Human).